The sequence spans 216 residues: MIF4G domain-containing protein A (216 aa).

The MIF4G domain maps to 2 to 199 (DSAWTALDME…LEILEFRASG (198 aa)).

Belongs to the MIF4GD family. As to quaternary structure, interacts with eif4g1, eif4g2 and slbp; probably tethered by SLBP to the 3'-end of mRNAs ending with the histone stem-loop, it also interacts with eif4g1 which is bound to their 5'-end.

It localises to the cytoplasm. The protein resides in the nucleus. Functions in replication-dependent translation of histone mRNAs which differ from other eukaryotic mRNAs in that they do not end with a poly-A tail but a stem-loop. May participate in circularizing those mRNAs specifically enhancing their translation. The protein is MIF4G domain-containing protein A (mif4gda) of Danio rerio (Zebrafish).